A 556-amino-acid chain; its full sequence is MQFDYIIIGAGSAGNVLATRLTEDPNTSVLLLEAGGPDYRFDFRTQMPAALAFPLQGKRYNWAYETEPEPFMNNRRMECGRGKGLGGSSLINGMCYIRGNALDLDNWAQEPGLENWSYLDCLPYYRKAETRDMGENDYHGGDGPVSVTTSKPGVNPLFEAMIEAGVQAGYPRTDDLNGYQQEGFGPMDRTVTPQGRRASTARGYLDQAKSRPNLTIRTHAMTDHIIFDGKRAVGVEWLEGDSTIPTRATANKEVLLCAGAIASPQILQRSGVGNAELLAEFDIPLVHELPGVGENLQDHLEMYLQYECKEPVSLYPALQWWNQPKIGAEWLFGGTGVGASNHFEAGGFIRSREEFAWPNIQYHFLPVAINYNGSNAVKEHGFQCHVGSMRSPSRGHVRIKSRDPHQHPAILFNYMSHEQDWQEFRDAIRITREIMHQPALDQYRGREISPGVECQTDEQLDEFVRNHAETAFHPCGTCKMGYDEMSVVDGEGRVHGLEGLRVVDASIMPQIITGNLNATTIMIGEKIADMIRGQEALPRSTAGYFVANGMPVRAKK.

Residue 4–33 coordinates FAD; it reads DYIIIGAGSAGNVLATRLTEDPNTSVLLLE. Residue His-473 is the Proton acceptor of the active site.

This sequence belongs to the GMC oxidoreductase family. It depends on FAD as a cofactor.

It carries out the reaction choline + A = betaine aldehyde + AH2. The enzyme catalyses betaine aldehyde + NAD(+) + H2O = glycine betaine + NADH + 2 H(+). It participates in amine and polyamine biosynthesis; betaine biosynthesis via choline pathway; betaine aldehyde from choline (cytochrome c reductase route): step 1/1. Functionally, involved in the biosynthesis of the osmoprotectant glycine betaine. Catalyzes the oxidation of choline to betaine aldehyde and betaine aldehyde to glycine betaine at the same rate. This chain is Oxygen-dependent choline dehydrogenase, found in Escherichia coli (strain K12 / DH10B).